The primary structure comprises 192 residues: Flavin prenyltransferase UbiX (192 aa).

FMN contacts are provided by residues Gly10 to Ser12, Ser36, Ser92 to Thr95, and Arg127. Dimethylallyl phosphate-binding residues include Tyr157 and Lys173.

This sequence belongs to the UbiX/PAD1 family.

It catalyses the reaction dimethylallyl phosphate + FMNH2 = prenylated FMNH2 + phosphate. In terms of biological role, flavin prenyltransferase that catalyzes the synthesis of the prenylated FMN cofactor (prenyl-FMN) for 4-hydroxy-3-polyprenylbenzoic acid decarboxylase UbiD. The prenyltransferase is metal-independent and links a dimethylallyl moiety from dimethylallyl monophosphate (DMAP) to the flavin N5 and C6 atoms of FMN. This Chlamydia muridarum (strain MoPn / Nigg) protein is Flavin prenyltransferase UbiX.